Consider the following 389-residue polypeptide: Cellobiose 2-epimerase (389 aa).

It belongs to the cellobiose 2-epimerase family.

The protein resides in the cytoplasm. The enzyme catalyses D-cellobiose = beta-D-glucosyl-(1-&gt;4)-D-mannopyranose. With respect to regulation, enhanced by Mg(2+) and Ca(2+) ions, ethylenediaminetetraacetic acid, ethylene glycol tetraacetic acid and citrate. Inhibited by Al(3+), Fe(3+), Co(2+), Cu(2+), Zn(2+), Pb(2+) and Ag(+) ions, iodoacetate, 4-chloromercuribenzoate and N-bromosuccinimide. Catalyzes the reversible epimerization of cellobiose to 4-O-beta-D-glucopyranosyl-D-mannose (Glc-Man). Can also epimerize cellotriose to Glc-Glc-Man, cellotetraose to Glc-Glc-Glc-Man, and lactose to epilactose. This Ruminococcus albus protein is Cellobiose 2-epimerase (ce-ne1).